The primary structure comprises 893 residues: Ubiquitin-like protease 2 (893 aa).

The protease stretch occupies residues P538–K800. Catalysis depends on residues H644, D678, and C743.

The protein belongs to the peptidase C48 family.

It localises to the nucleus. The protein localises to the cytoplasm. Its subcellular location is the cytosol. Protease that catalyzes two essential functions in the smo-1 pathway: processing of full-length smo-1 to their mature forms and deconjugation of smo-1 from targeted proteins. May deconjugate smo-1 from the cadherin protein hmr-1 and plays a role in its recruitment to and the maintenance of adherens junctions. Required for epidermal morphogenesis during embryonic development. The chain is Ubiquitin-like protease 2 from Caenorhabditis elegans.